Here is a 331-residue protein sequence, read N- to C-terminus: Probable protein phosphatase 2C 72 (331 aa).

Residues 43–324 (LGSVCSIQGT…DDITVICLFL (282 aa)) enclose the PPM-type phosphatase domain. Aspartate 78, glycine 79, aspartate 268, and aspartate 315 together coordinate Mn(2+).

This sequence belongs to the PP2C family. Requires Mg(2+) as cofactor. Mn(2+) serves as cofactor.

The enzyme catalyses O-phospho-L-seryl-[protein] + H2O = L-seryl-[protein] + phosphate. It carries out the reaction O-phospho-L-threonyl-[protein] + H2O = L-threonyl-[protein] + phosphate. This chain is Probable protein phosphatase 2C 72, found in Arabidopsis thaliana (Mouse-ear cress).